A 182-amino-acid polypeptide reads, in one-letter code: uncharacterized protein (182 aa).

A helical transmembrane segment spans residues 17–34 (LSLVLFAVLSVLPLGGCA). 2 TPR repeats span residues 89–122 (VDAA…TPDN) and 123–156 (LRAL…NPEN).

The protein resides in the membrane. This is an uncharacterized protein from Sinorhizobium fredii (strain NBRC 101917 / NGR234).